Reading from the N-terminus, the 150-residue chain is 3-hydroxyacyl-[acyl-carrier-protein] dehydratase FabZ (150 aa).

Histidine 57 is a catalytic residue.

It belongs to the thioester dehydratase family. FabZ subfamily.

It is found in the cytoplasm. The enzyme catalyses a (3R)-hydroxyacyl-[ACP] = a (2E)-enoyl-[ACP] + H2O. Its function is as follows. Involved in unsaturated fatty acids biosynthesis. Catalyzes the dehydration of short chain beta-hydroxyacyl-ACPs and long chain saturated and unsaturated beta-hydroxyacyl-ACPs. The protein is 3-hydroxyacyl-[acyl-carrier-protein] dehydratase FabZ of Mannheimia succiniciproducens (strain KCTC 0769BP / MBEL55E).